The sequence spans 517 residues: Crotonobetaine/carnitine--CoA ligase (517 aa).

Belongs to the ATP-dependent AMP-binding enzyme family.

It catalyses the reaction 4-(trimethylamino)butanoate + ATP + CoA = 4-(trimethylamino)butanoyl-CoA + AMP + diphosphate. The enzyme catalyses crotonobetaine + ATP + CoA = crotonobetainyl-CoA + AMP + diphosphate. The catalysed reaction is (R)-carnitine + ATP + CoA = (R)-carnitinyl-CoA + AMP + diphosphate. The protein operates within amine and polyamine metabolism; carnitine metabolism. Catalyzes the transfer of CoA to carnitine, generating the initial carnitinyl-CoA needed for the CaiB reaction cycle. Also has activity toward crotonobetaine and gamma-butyrobetaine. In Salmonella paratyphi A (strain ATCC 9150 / SARB42), this protein is Crotonobetaine/carnitine--CoA ligase.